An 84-amino-acid polypeptide reads, in one-letter code: ATP synthase subunit c (84 aa).

The next 2 membrane-spanning stretches (helical) occupy residues I9–I29 and I54–I74.

It belongs to the ATPase C chain family. F-type ATPases have 2 components, F(1) - the catalytic core - and F(0) - the membrane proton channel. F(1) has five subunits: alpha(3), beta(3), gamma(1), delta(1), epsilon(1). F(0) has three main subunits: a(1), b(2) and c(10-14). The alpha and beta chains form an alternating ring which encloses part of the gamma chain. F(1) is attached to F(0) by a central stalk formed by the gamma and epsilon chains, while a peripheral stalk is formed by the delta and b chains.

The protein resides in the cell inner membrane. Its function is as follows. F(1)F(0) ATP synthase produces ATP from ADP in the presence of a proton or sodium gradient. F-type ATPases consist of two structural domains, F(1) containing the extramembraneous catalytic core and F(0) containing the membrane proton channel, linked together by a central stalk and a peripheral stalk. During catalysis, ATP synthesis in the catalytic domain of F(1) is coupled via a rotary mechanism of the central stalk subunits to proton translocation. In terms of biological role, key component of the F(0) channel; it plays a direct role in translocation across the membrane. A homomeric c-ring of between 10-14 subunits forms the central stalk rotor element with the F(1) delta and epsilon subunits. This chain is ATP synthase subunit c, found in Actinobacillus pleuropneumoniae serotype 7 (strain AP76).